The following is a 223-amino-acid chain: MKFFAFSMLIGEASPIVLALRRTTLEVRQLDPIIRSELEQGSSSSCPKAILIFARGSTEIGNMGVSAGPAVASALEAYGADQIWVQGVGGPYTADLPSNFLPGGTSQSAINEAVRLFNEANTKCPSTPIVAGGYSQGTAVMAGAIPKLDAVRARVVGTVLFGYTQNQQNNKGIKDYPQEDLQVYCEVGDLVCDGTLIITVSHFLYLEEAAGPAPEFLKSKIGA.

The N-terminal stretch at Met1–Ala19 is a signal peptide. An intrachain disulfide couples Cys46 to Cys124. The active-site Nucleophile is Ser135. A disulfide bridge links Cys185 with Cys192. Residue Asp189 is part of the active site. His202 serves as the catalytic Proton donor/acceptor.

Belongs to the cutinase family. The 2 disulfide bonds play a critical role in holding the catalytic residues in juxta-position; reduction of the disulfide bridges results in the complete inactivation of the enzyme.

The protein resides in the secreted. It carries out the reaction cutin + H2O = cutin monomers.. Its function is as follows. Catalyzes the hydrolysis of complex carboxylic polyesters found in the cell wall of plants. Degrades cutin, a macromolecule that forms the structure of the plant cuticle. Allows pathogenic fungi to penetrate through the cuticular barrier into the host plant during the initial stage of fungal infection. The polypeptide is Cutinase (CUT) (Didymella rabiei (Chickpea ascochyta blight fungus)).